Consider the following 536-residue polypeptide: C-22 sterol desaturase ERG5A (536 aa).

Residues 41 to 61 form a helical membrane-spanning segment; that stretch reads VWTWVFTLVALCIAYDQIAYI. Cys481 is a heme binding site.

Belongs to the cytochrome P450 family. The cofactor is heme.

It localises to the endoplasmic reticulum membrane. It carries out the reaction 5-dehydroepisterol + NADPH + O2 + H(+) = ergosta-5,7,22,24(28)-tetraen-3beta-ol + NADP(+) + 2 H2O. Its pathway is steroid metabolism; ergosterol biosynthesis. C-22 sterol desaturase; part of the third module of ergosterol biosynthesis pathway that includes the late steps of the pathway. ERG5A and ERG5B convert 5-dehydroepisterol into ergosta-5,7,22,24(28)-tetraen-3beta-ol by forming the C-22(23) double bond in the sterol side chain. The third module or late pathway involves the ergosterol synthesis itself through consecutive reactions that mainly occur in the endoplasmic reticulum (ER) membrane. Firstly, the squalene synthase ERG9 catalyzes the condensation of 2 farnesyl pyrophosphate moieties to form squalene, which is the precursor of all steroids. Squalene synthase is crucial for balancing the incorporation of farnesyl diphosphate (FPP) into sterol and nonsterol isoprene synthesis. Secondly, squalene is converted into lanosterol by the consecutive action of the squalene epoxidase ERG1 and the lanosterol synthase ERG7. Then, the delta(24)-sterol C-methyltransferase ERG6 methylates lanosterol at C-24 to produce eburicol. Eburicol is the substrate of the sterol 14-alpha demethylase encoded by CYP51A, CYP51B and CYP51C, to yield 4,4,24-trimethyl ergosta-8,14,24(28)-trienol. CYP51B encodes the enzyme primarily responsible for sterol 14-alpha-demethylation, and plays an essential role in ascospore formation. CYP51A encodes an additional sterol 14-alpha-demethylase, induced on ergosterol depletion and responsible for the intrinsic variation in azole sensitivity. The third CYP51 isoform, CYP51C, does not encode a sterol 14-alpha-demethylase, but is required for full virulence on host wheat ears. The C-14 reductase ERG24 then reduces the C14=C15 double bond which leads to 4,4-dimethylfecosterol. A sequence of further demethylations at C-4, involving the C-4 demethylation complex containing the C-4 methylsterol oxidases ERG25, the sterol-4-alpha-carboxylate 3-dehydrogenase ERG26 and the 3-keto-steroid reductase ERG27, leads to the production of fecosterol via 4-methylfecosterol. ERG28 has a role as a scaffold to help anchor ERG25, ERG26 and ERG27 to the endoplasmic reticulum. The C-8 sterol isomerase ERG2 then catalyzes the reaction which results in unsaturation at C-7 in the B ring of sterols and thus converts fecosterol to episterol. The sterol-C5-desaturases ERG3A and ERG3BB then catalyze the introduction of a C-5 double bond in the B ring to produce 5-dehydroepisterol. The C-22 sterol desaturases ERG5A and ERG5B further convert 5-dehydroepisterol into ergosta-5,7,22,24(28)-tetraen-3beta-ol by forming the C-22(23) double bond in the sterol side chain. Finally, ergosta-5,7,22,24(28)-tetraen-3beta-ol is substrate of the C-24(28) sterol reductase ERG4 to produce ergosterol. In Gibberella zeae (strain ATCC MYA-4620 / CBS 123657 / FGSC 9075 / NRRL 31084 / PH-1) (Wheat head blight fungus), this protein is C-22 sterol desaturase ERG5A.